The chain runs to 325 residues: Electron transfer flavoprotein subunit alpha (325 aa).

262–290 (LYIACGISGAIQHLAGMSNSKVIVAINKD) contributes to the FAD binding site.

It belongs to the ETF alpha-subunit/FixB family. As to quaternary structure, heterodimer of an alpha and a beta subunit. Requires FAD as cofactor.

In terms of biological role, the electron transfer flavoprotein serves as a specific electron acceptor for other dehydrogenases. It transfers the electrons to the main respiratory chain via ETF-ubiquinone oxidoreductase (ETF dehydrogenase). The sequence is that of Electron transfer flavoprotein subunit alpha (etfA) from Bacillus subtilis (strain 168).